Here is a 635-residue protein sequence, read N- to C-terminus: 5-aminolevulinate synthase, non-specific, mitochondrial (635 aa).

The transit peptide at 1 to 56 directs the protein to the mitochondrion; that stretch reads MEAVVRRCPFLARVSQAFLQKAGPSLLFYAQHCPKMMEAAPPAAARGLATSASRGQ. Residues 44 to 66 show a composition bias toward low complexity; it reads AARGLATSASRGQQVEETPAAQP. Positions 44–94 are disordered; the sequence is AARGLATSASRGQQVEETPAAQPEAKKAKEVAQQNTDGSQPPAGHPPAAAV. Substrate-binding residues include Arg-212, Ser-329, and Lys-348. Positions 381, 409, and 437 each coordinate pyridoxal 5'-phosphate. Lys-440 is a catalytic residue. Residue Lys-440 is modified to N6-(pyridoxal phosphate)lysine. Pyridoxal 5'-phosphate-binding residues include Thr-469 and Thr-470. Thr-557 is a binding site for substrate.

The protein belongs to the class-II pyridoxal-phosphate-dependent aminotransferase family. In terms of assembly, homodimer. It depends on pyridoxal 5'-phosphate as a cofactor. Ubiquitous.

The protein localises to the mitochondrion inner membrane. It catalyses the reaction succinyl-CoA + glycine + H(+) = 5-aminolevulinate + CO2 + CoA. It functions in the pathway porphyrin-containing compound metabolism; protoporphyrin-IX biosynthesis; 5-aminolevulinate from glycine: step 1/1. Its function is as follows. Catalyzes the pyridoxal 5'-phosphate (PLP)-dependent condensation of succinyl-CoA and glycine to form aminolevulinic acid (ALA), with CoA and CO2 as by-products. This is 5-aminolevulinate synthase, non-specific, mitochondrial (ALAS1) from Gallus gallus (Chicken).